The sequence spans 116 residues: Early 4 ORF3 protein (116 aa).

This sequence belongs to the adenoviridae E4 ORF3 family. As to quaternary structure, homodimer. Multimerizes through C-terminus tail by reciprocal or nonreciprocal interactions. Interacts with host PML isoform 2 C-terminal disordered region. Interacts with E1B-55k; this interaction is necessary for E1B 55 kDa protein to localize to the nuclear matrix fraction of the cell. May interact with host TRIM24, CREBBP, EP300, PRKDC and the MRN complex MRE11/RAD50/NBS1; these interactions may happen through nuclear bodies complexes.

Its subcellular location is the host nucleus. Forms a multivalent network in host nucleus that inhibits nuclear bodies and prevents antiviral cellular activities. The network is made of multimerized dimers and surrounds adenovirus replication centers and nucleolus. Plays a role in splicing of the major late transcript. Prevents viral genome concatemer formation. The chain is Early 4 ORF3 protein from Human adenovirus C serotype 2 (HAdV-2).